The primary structure comprises 108 residues: Trissin (108 aa).

Positions 1-29 (MTKTTMHWLAHFQIILLCIWLMCPPSSQA) are cleaved as a signal peptide. 3 disulfides stabilise this stretch: C32/C43, C35/C52, and C39/C51. Residues 57-108 (RKRSDPDALRQSSNRRLIDFILLQGRALFTQELRERRHNGTLMDLGLNTYYP) constitute a propeptide that is removed on maturation.

It localises to the secreted. Its function is as follows. Activates the G-protein coupled receptor TrissinR in vitro, leading to increased intracellular calcium ion levels. The chain is Trissin from Drosophila melanogaster (Fruit fly).